We begin with the raw amino-acid sequence, 637 residues long: Neuroendocrine convertase 2 (637 aa).

The signal sequence occupies residues 1 to 24; that stretch reads MEGGCGSQWKAAGLLFCVMVFASA. Positions 25–108 are excised as a propeptide; sequence ERPVFTNHFL…QQEGFDRKKR (84 aa). The region spanning 128–452 is the Peptidase S8 domain; that stretch reads QWYLFNTGQA…YGVLDAGAMV (325 aa). Catalysis depends on charge relay system residues aspartate 166 and histidine 207. 2 cysteine pairs are disulfide-bonded: cysteine 224–cysteine 375 and cysteine 316–cysteine 346. A glycan (N-linked (GlcNAc...) asparagine) is linked at asparagine 374. Serine 383 acts as the Charge relay system in catalysis. The P/Homo B domain maps to 460 to 596; sequence TVPERFHCVG…TLMLHGTQSA (137 aa). Cysteine 467 and cysteine 493 are joined by a disulfide. N-linked (GlcNAc...) asparagine glycosylation is found at asparagine 513 and asparagine 523.

The protein belongs to the peptidase S8 family. Furin subfamily.

The protein resides in the cytoplasmic vesicle. The protein localises to the secretory vesicle. Its subcellular location is the secreted. It catalyses the reaction Release of protein hormones and neuropeptides from their precursors, generally by hydrolysis of -Lys-Arg-|- bonds.. Its function is as follows. Serine endopeptidase which is involved in the processing of hormone and other protein precursors at sites comprised of pairs of basic amino acid residues. Responsible for the release of glucagon from proglucagon in pancreatic A cells. In Rattus norvegicus (Rat), this protein is Neuroendocrine convertase 2 (Pcsk2).